The primary structure comprises 721 residues: Methionine--tRNA ligase (721 aa).

The short motif at 27-37 (PYANGQIHIGH) is the 'HIGH' region element. 4 residues coordinate Zn(2+): Cys-158, Cys-161, Cys-171, and Cys-174. The short motif at 348–352 (KMSKS) is the 'KMSKS' region element. Residue Lys-351 coordinates ATP. The tRNA-binding domain maps to 615–721 (DFAKIDLRIA…SGAKPGMRVK (107 aa)).

It belongs to the class-I aminoacyl-tRNA synthetase family. MetG type 1 subfamily. In terms of assembly, homodimer. It depends on Zn(2+) as a cofactor.

It localises to the cytoplasm. The catalysed reaction is tRNA(Met) + L-methionine + ATP = L-methionyl-tRNA(Met) + AMP + diphosphate. Its function is as follows. Is required not only for elongation of protein synthesis but also for the initiation of all mRNA translation through initiator tRNA(fMet) aminoacylation. This Burkholderia vietnamiensis (strain G4 / LMG 22486) (Burkholderia cepacia (strain R1808)) protein is Methionine--tRNA ligase.